We begin with the raw amino-acid sequence, 322 residues long: Secreted RxLR effector protein RXLR-C17 (322 aa).

The N-terminal stretch at 1 to 25 (MREPAFSFRLHLFAAMILLVDVFSA) is a signal peptide. Positions 43 to 62 (RQLRARDSQAKNYVIRDEER) match the RxLR-dEER motif. A glycan (N-linked (GlcNAc...) asparagine) is linked at asparagine 73.

Belongs to the RxLR effector family.

It localises to the secreted. The protein resides in the host cytoplasm. Its subcellular location is the host nucleus. Secreted effector that suppresses pattern-triggered immunity (PTI) in plant host. This Plasmopara halstedii (Downy mildew of sunflower) protein is Secreted RxLR effector protein RXLR-C17.